Consider the following 145-residue polypeptide: Flagellar assembly factor FliW (145 aa).

The protein belongs to the FliW family. As to quaternary structure, interacts with translational regulator CsrA and flagellin(s).

The protein localises to the cytoplasm. In terms of biological role, acts as an anti-CsrA protein, binds CsrA and prevents it from repressing translation of its target genes, one of which is flagellin. Binds to flagellin and participates in the assembly of the flagellum. This chain is Flagellar assembly factor FliW, found in Clostridium tetani (strain Massachusetts / E88).